The following is a 449-amino-acid chain: Elongation factor 1-alpha (449 aa).

A tr-type G domain is found at 5 to 230 (KVHINIVVIG…DQINEPKRPS (226 aa)). The interval 14–21 (GHVDSGKS) is G1. A GTP-binding site is contributed by 14 to 21 (GHVDSGKS). An N6,N6-dimethyllysine modification is found at Lys55. The tract at residues 70–74 (GITID) is G2. Lys79 is subject to N6,N6,N6-trimethyllysine. The G3 stretch occupies residues 91–94 (DAPG). Residues 91 to 95 (DAPGH) and 153 to 156 (NKMD) contribute to the GTP site. Residues 153-156 (NKMD) form a G4 region. Lys187 is subject to N6,N6,N6-trimethyllysine. Residues 194 to 196 (SGF) form a G5 region. Lys261 bears the N6-methyllysine mark. Glu289 carries the 5-glutamyl glycerylphosphorylethanolamine modification. Residue Lys306 is modified to N6,N6,N6-trimethyllysine. At Glu362 the chain carries 5-glutamyl glycerylphosphorylethanolamine. Lys396 is modified (N6,N6,N6-trimethyllysine).

The protein belongs to the TRAFAC class translation factor GTPase superfamily. Classic translation factor GTPase family. EF-Tu/EF-1A subfamily.

Its subcellular location is the cytoplasm. In terms of biological role, this protein promotes the GTP-dependent binding of aminoacyl-tRNA to the A-site of ribosomes during protein biosynthesis. The polypeptide is Elongation factor 1-alpha (Daucus carota (Wild carrot)).